Reading from the N-terminus, the 252-residue chain is Triosephosphate isomerase (252 aa).

10 to 12 contributes to the substrate binding site; that stretch reads NWK. H96 functions as the Electrophile in the catalytic mechanism. E168 serves as the catalytic Proton acceptor. Residues G174, S214, and 235-236 contribute to the substrate site; that span reads GG.

It belongs to the triosephosphate isomerase family. Homodimer.

The protein resides in the cytoplasm. The enzyme catalyses D-glyceraldehyde 3-phosphate = dihydroxyacetone phosphate. Its pathway is carbohydrate biosynthesis; gluconeogenesis. It participates in carbohydrate degradation; glycolysis; D-glyceraldehyde 3-phosphate from glycerone phosphate: step 1/1. Functionally, involved in the gluconeogenesis. Catalyzes stereospecifically the conversion of dihydroxyacetone phosphate (DHAP) to D-glyceraldehyde-3-phosphate (G3P). This chain is Triosephosphate isomerase, found in Streptococcus pyogenes serotype M18 (strain MGAS8232).